The sequence spans 326 residues: Intracellular serine protease (326 aa).

The 281-residue stretch at P23–E303 folds into the Peptidase S8 domain. Active-site charge relay system residues include D49, H86, and S244.

This sequence belongs to the peptidase S8 family.

In terms of biological role, involved in the generation of beta- and alpha-amylases from the large amylase precursor. The sequence is that of Intracellular serine protease (isp) from Paenibacillus polymyxa (Bacillus polymyxa).